The primary structure comprises 612 residues: Probable serine/threonine-protein kinase WNK4 (612 aa).

The Protein kinase domain maps to 25 to 282 (IRYNEVLGRG…AKELLQDPFL (258 aa)). ATP-binding positions include 105-108 (TELF) and lysine 155. Aspartate 172 serves as the catalytic Proton acceptor.

It belongs to the protein kinase superfamily. Ser/Thr protein kinase family. WNK subfamily.

The catalysed reaction is L-seryl-[protein] + ATP = O-phospho-L-seryl-[protein] + ADP + H(+). The enzyme catalyses L-threonyl-[protein] + ATP = O-phospho-L-threonyl-[protein] + ADP + H(+). The protein is Probable serine/threonine-protein kinase WNK4 (WNK4) of Oryza sativa subsp. japonica (Rice).